The following is a 496-amino-acid chain: Serine/threonine-protein kinase Sgk3 (496 aa).

One can recognise a PX domain in the interval 12 to 124; that stretch reads SCPSVSIPSS…AFLQMDSPRH (113 aa). The tract at residues 121–157 is disordered; the sequence is SPRHQSDPSEDEDERSTPKPHSTSRNINLGPTGNPHA. 2 positions are modified to phosphoserine: Ser126 and Ser129. Residues 139–151 show a composition bias toward polar residues; that stretch reads KPHSTSRNINLGP. The 303-residue stretch at 162–464 folds into the Protein kinase domain; it reads FDFLKVIGKG…EETVPYSVCV (303 aa). ATP is bound by residues 168-176 and Lys191; that span reads IGKGSFGKV. The Nuclear localization signal motif lies at 195-205; the sequence is KKIVLNRKEQK. Asp286 functions as the Proton acceptor in the catalytic mechanism. Thr320 carries the phosphothreonine; by PDPK1 modification. Residues 420-496 enclose the AGC-kinase C-terminal domain; the sequence is ESLSWTDLVQ…YAPPSEDLFL (77 aa). Ser486 carries the post-translational modification Phosphoserine.

The protein belongs to the protein kinase superfamily. AGC Ser/Thr protein kinase family. Interacts with GSK3B and FLII. Interacts with PDPK1 in a phosphorylation-dependent manner. Post-translationally, activated by phosphorylation on Ser-486 by an unknown kinase (may be mTORC2 but not confirmed), transforming it into a substrate for PDPK1 which then phosphorylates it on Thr-320.

It localises to the cytoplasmic vesicle. Its subcellular location is the early endosome. It is found in the recycling endosome. The enzyme catalyses L-seryl-[protein] + ATP = O-phospho-L-seryl-[protein] + ADP + H(+). It catalyses the reaction L-threonyl-[protein] + ATP = O-phospho-L-threonyl-[protein] + ADP + H(+). Two specific sites, one in the kinase domain (Thr-320) and the other in the C-terminal regulatory region (Ser-486), need to be phosphorylated for its full activation. Its function is as follows. Serine/threonine-protein kinase which is involved in the regulation of a wide variety of ion channels, membrane transporters, cell growth, proliferation, survival and migration. Up-regulates Na(+) channels: SCNN1A/ENAC and SCN5A, K(+) channels: KCNA3/KV1.3, KCNE1, KCNQ1 and KCNH2/HERG, epithelial Ca(2+) channels: TRPV5 and TRPV6, chloride channel: BSND, creatine transporter: SLC6A8, Na(+)/dicarboxylate cotransporter: SLC13A2/NADC1, Na(+)-dependent phosphate cotransporter: SLC34A2/NAPI-2B, amino acid transporters: SLC1A5/ASCT2 and SLC6A19, glutamate transporters: SLC1A3/EAAT1, SLC1A6/EAAT4 and SLC1A7/EAAT5, glutamate receptors: GRIA1/GLUR1 and GRIK2/GLUR6, Na(+)/H(+) exchanger: SLC9A3/NHE3, and the Na(+)/K(+) ATPase. Plays a role in the regulation of renal tubular phosphate transport and bone density. Phosphorylates NEDD4L and GSK3B. Positively regulates ER transcription activity through phosphorylation of FLII. Negatively regulates the function of ITCH/AIP4 via its phosphorylation and thereby prevents CXCR4 from being efficiently sorted to lysosomes. This Rattus norvegicus (Rat) protein is Serine/threonine-protein kinase Sgk3 (Sgk3).